We begin with the raw amino-acid sequence, 81 residues long: Photosystem I iron-sulfur center (81 aa).

4Fe-4S ferredoxin-type domains are found at residues 2-31 and 39-68; these read SHSV…MVPW and IASA…VRVY. The [4Fe-4S] cluster site is built by C11, C14, C17, C21, C48, C51, C54, and C58.

The eukaryotic PSI reaction center is composed of at least 11 subunits. It depends on [4Fe-4S] cluster as a cofactor.

Its subcellular location is the plastid. The protein localises to the chloroplast thylakoid membrane. It catalyses the reaction reduced [plastocyanin] + hnu + oxidized [2Fe-2S]-[ferredoxin] = oxidized [plastocyanin] + reduced [2Fe-2S]-[ferredoxin]. In terms of biological role, apoprotein for the two 4Fe-4S centers FA and FB of photosystem I (PSI); essential for photochemical activity. FB is the terminal electron acceptor of PSI, donating electrons to ferredoxin. The C-terminus interacts with PsaA/B/D and helps assemble the protein into the PSI complex. Required for binding of PsaD and PsaE to PSI. PSI is a plastocyanin/cytochrome c6-ferredoxin oxidoreductase, converting photonic excitation into a charge separation, which transfers an electron from the donor P700 chlorophyll pair to the spectroscopically characterized acceptors A0, A1, FX, FA and FB in turn. This chain is Photosystem I iron-sulfur center, found in Emiliania huxleyi (Coccolithophore).